A 200-amino-acid polypeptide reads, in one-letter code: Peptidyl-tRNA hydrolase (200 aa).

Tyr-16 serves as a coordination point for tRNA. His-21 (proton acceptor) is an active-site residue. Phe-67, Asn-69, and Asn-115 together coordinate tRNA.

This sequence belongs to the PTH family. In terms of assembly, monomer.

It is found in the cytoplasm. The enzyme catalyses an N-acyl-L-alpha-aminoacyl-tRNA + H2O = an N-acyl-L-amino acid + a tRNA + H(+). Its function is as follows. Hydrolyzes ribosome-free peptidyl-tRNAs (with 1 or more amino acids incorporated), which drop off the ribosome during protein synthesis, or as a result of ribosome stalling. In terms of biological role, catalyzes the release of premature peptidyl moieties from peptidyl-tRNA molecules trapped in stalled 50S ribosomal subunits, and thus maintains levels of free tRNAs and 50S ribosomes. The protein is Peptidyl-tRNA hydrolase of Prochlorococcus marinus (strain MIT 9312).